The chain runs to 119 residues: Holo-[acyl-carrier-protein] synthase (119 aa).

Residues Asp8 and Glu58 each coordinate Mg(2+).

This sequence belongs to the P-Pant transferase superfamily. AcpS family. The cofactor is Mg(2+).

It is found in the cytoplasm. It carries out the reaction apo-[ACP] + CoA = holo-[ACP] + adenosine 3',5'-bisphosphate + H(+). In terms of biological role, transfers the 4'-phosphopantetheine moiety from coenzyme A to a Ser of acyl-carrier-protein. The protein is Holo-[acyl-carrier-protein] synthase of Streptococcus suis (strain 05ZYH33).